The chain runs to 227 residues: uncharacterized protein (227 aa).

The signal sequence occupies residues 1–25 (MLIMKKLLLIAATSATMLSSSVSFA).

The protein to R.conorii RC1281.

This is an uncharacterized protein from Rickettsia conorii (strain ATCC VR-613 / Malish 7).